A 426-amino-acid chain; its full sequence is Histidine--tRNA ligase (426 aa).

Belongs to the class-II aminoacyl-tRNA synthetase family. In terms of assembly, homodimer.

The protein resides in the cytoplasm. The enzyme catalyses tRNA(His) + L-histidine + ATP = L-histidyl-tRNA(His) + AMP + diphosphate + H(+). In Streptococcus equi subsp. zooepidemicus (strain MGCS10565), this protein is Histidine--tRNA ligase.